Here is a 95-residue protein sequence, read N- to C-terminus: Small ribosomal subunit protein bS6 (95 aa).

The protein belongs to the bacterial ribosomal protein bS6 family.

In terms of biological role, binds together with bS18 to 16S ribosomal RNA. The chain is Small ribosomal subunit protein bS6 from Clostridium acetobutylicum (strain ATCC 824 / DSM 792 / JCM 1419 / IAM 19013 / LMG 5710 / NBRC 13948 / NRRL B-527 / VKM B-1787 / 2291 / W).